Consider the following 796-residue polypeptide: uncharacterized protein (796 aa).

Its subcellular location is the mitochondrion. This is an uncharacterized protein from Dictyostelium discoideum (Social amoeba).